A 330-amino-acid chain; its full sequence is Anthranilate phosphoribosyltransferase (330 aa).

Residues Gly75, 78-79 (GD), Thr83, 85-88 (NVST), 103-111 (KHGNRAASS), and Ala115 each bind 5-phospho-alpha-D-ribose 1-diphosphate. Position 75 (Gly75) interacts with anthranilate. A Mg(2+)-binding site is contributed by Ser87. Position 106 (Asn106) interacts with anthranilate. An anthranilate-binding site is contributed by Arg161. The Mg(2+) site is built by Asp220 and Glu221.

Belongs to the anthranilate phosphoribosyltransferase family. In terms of assembly, homodimer. The cofactor is Mg(2+).

The enzyme catalyses N-(5-phospho-beta-D-ribosyl)anthranilate + diphosphate = 5-phospho-alpha-D-ribose 1-diphosphate + anthranilate. Its pathway is amino-acid biosynthesis; L-tryptophan biosynthesis; L-tryptophan from chorismate: step 2/5. Functionally, catalyzes the transfer of the phosphoribosyl group of 5-phosphorylribose-1-pyrophosphate (PRPP) to anthranilate to yield N-(5'-phosphoribosyl)-anthranilate (PRA). The protein is Anthranilate phosphoribosyltransferase of Novosphingobium aromaticivorans (strain ATCC 700278 / DSM 12444 / CCUG 56034 / CIP 105152 / NBRC 16084 / F199).